The primary structure comprises 427 residues: Tol-Pal system protein TolB (427 aa).

Residues 1-23 (MKLLKRLVSVFAIVLAVGSNAFA) form the signal peptide.

It belongs to the TolB family. The Tol-Pal system is composed of five core proteins: the inner membrane proteins TolA, TolQ and TolR, the periplasmic protein TolB and the outer membrane protein Pal. They form a network linking the inner and outer membranes and the peptidoglycan layer.

The protein resides in the periplasm. Part of the Tol-Pal system, which plays a role in outer membrane invagination during cell division and is important for maintaining outer membrane integrity. The sequence is that of Tol-Pal system protein TolB from Haemophilus influenzae (strain ATCC 51907 / DSM 11121 / KW20 / Rd).